The primary structure comprises 618 residues: Protein fem-1 homolog C (618 aa).

ANK repeat units lie at residues 2 to 31 (DLKTAVFNAARDGKLKLLQKLLENKSDREV), 40 to 70 (NGATPLLMASRYGHLELVEFLMECCCAPVEL), 82 to 111 (EGAPPLWAASAAGHLKVVQSLLGHGASVNN), 115 to 144 (TNSTPLRAACFDGHLDIVRYLVEHQADLEV), 148 to 177 (HGHTCLMISCYKGHREIAQFLLEKGADVNR), 181 to 210 (KGNTALHDCAESGSLEIMKMLLKFGASMEK), and 213 to 243 (YGMTPLLSASVTGHTNIVDFLTAHPQTGLAE). 2 TPR repeats span residues 245-279 (ISALELLGATFVDKKRDLLGALQYWKRAMELRHSE) and 337-370 (SYYIRYRGAVYADSGNFERCIRLWKYALDMQQSN). 2 ANK repeats span residues 482 to 524 (NGFS…DVNS) and 528 to 557 (DDNSPLHVAASNNHPDIMKLLISGGTHFDS).

It belongs to the fem-1 family. As to quaternary structure, component of a CRL2 E3 ubiquitin-protein ligase complex, also named ECS (Elongin BC-CUL2/5-SOCS-box protein) complex.

The protein operates within protein modification; protein ubiquitination. Functionally, substrate-recognition component of a Cul2-RING (CRL2) E3 ubiquitin-protein ligase complex of the DesCEND (destruction via C-end degrons) pathway, which recognizes a C-degron located at the extreme C terminus of target proteins, leading to their ubiquitination and degradation. The C-degron recognized by the DesCEND pathway is usually a motif of less than ten residues and can be present in full-length proteins, truncated proteins or proteolytically cleaved forms. The CRL2(FEM1C) complex specifically recognizes proteins with an arginine at the C-terminus: recognizes and binds proteins ending with -Lys/Arg-Xaa-Arg and -Lys/Arg-Xaa-Xaa-Arg C-degrons, leading to their ubiquitination and degradation. The sequence is that of Protein fem-1 homolog C from Danio rerio (Zebrafish).